Here is a 721-residue protein sequence, read N- to C-terminus: Fatty acid oxidation complex subunit alpha (721 aa).

The tract at residues 1–190 (MIYEGKAITV…KVGAVDAVVA (190 aa)) is enoyl-CoA hydratase/isomerase. Asp297 contributes to the substrate binding site. The interval 312-721 (KDVKQAAVLG…SFFGQASSEE (410 aa)) is 3-hydroxyacyl-CoA dehydrogenase. NAD(+)-binding positions include Met325, Asp344, 401-403 (VVE), Lys408, and Ser430. His451 functions as the For 3-hydroxyacyl-CoA dehydrogenase activity in the catalytic mechanism. Position 454 (Asn454) interacts with NAD(+). Asn501 and Tyr660 together coordinate substrate.

In the N-terminal section; belongs to the enoyl-CoA hydratase/isomerase family. The protein in the C-terminal section; belongs to the 3-hydroxyacyl-CoA dehydrogenase family. As to quaternary structure, heterotetramer of two alpha chains (FadB) and two beta chains (FadA).

The enzyme catalyses a (3S)-3-hydroxyacyl-CoA + NAD(+) = a 3-oxoacyl-CoA + NADH + H(+). It carries out the reaction a (3S)-3-hydroxyacyl-CoA = a (2E)-enoyl-CoA + H2O. It catalyses the reaction a 4-saturated-(3S)-3-hydroxyacyl-CoA = a (3E)-enoyl-CoA + H2O. The catalysed reaction is (3S)-3-hydroxybutanoyl-CoA = (3R)-3-hydroxybutanoyl-CoA. The enzyme catalyses a (3Z)-enoyl-CoA = a 4-saturated (2E)-enoyl-CoA. It carries out the reaction a (3E)-enoyl-CoA = a 4-saturated (2E)-enoyl-CoA. The protein operates within lipid metabolism; fatty acid beta-oxidation. Involved in the aerobic and anaerobic degradation of long-chain fatty acids via beta-oxidation cycle. Catalyzes the formation of 3-oxoacyl-CoA from enoyl-CoA via L-3-hydroxyacyl-CoA. It can also use D-3-hydroxyacyl-CoA and cis-3-enoyl-CoA as substrate. The polypeptide is Fatty acid oxidation complex subunit alpha (Pseudomonas syringae pv. syringae (strain B728a)).